Here is a 769-residue protein sequence, read N- to C-terminus: Trehalose 6-phosphate phosphorylase (769 aa).

Residue 342–343 (WD) coordinates substrate. Glu-480 acts as the Proton donor in catalysis. 589–590 (KQ) serves as a coordination point for substrate.

It belongs to the glycosyl hydrolase 65 family. Monomer.

It carries out the reaction alpha,alpha-trehalose 6-phosphate + phosphate = beta-D-glucose 1-phosphate + D-glucose 6-phosphate. Catalyzes the conversion of trehalose 6-phosphate into glucose 1-phosphate and glucose 6-phosphate. This chain is Trehalose 6-phosphate phosphorylase (trePP), found in Lactococcus lactis subsp. lactis (strain IL1403) (Streptococcus lactis).